A 517-amino-acid polypeptide reads, in one-letter code: Beclin-1-like protein (517 aa).

The interval 76–106 (LPRHKPPQSQGIPPRPRGASSPQPDATQSGK) is disordered. Residues 95-105 (SSPQPDATQSG) show a composition bias toward polar residues. Residues 172–266 (CLECMRVLSD…NRFNELEDRY (95 aa)) adopt a coiled-coil conformation.

It belongs to the beclin family. Component of a phosphatidylinositol 3-kinase (PI3K) complex composed of ATG6, SH3P2 and FREE1. Interacts with SINAT1, SINAT2, SINAT5, SINAT6, TRAF1A and TRAF1B. Interacts with TUBB8/TUB8. Component of a complex made of VPS38/USL1 and PI3K main subunits such as VPS15, ATG6/VPS30 and VPS34. Binds directly to VPS38/USL1. Ubiquitinated. The interaction with SINAT1 or SINAT2, and the presence of TRAF1A/MUSE14 and TRAF1B/MUSE13, mediates its proteasome-dependent degradation. In terms of tissue distribution, highly expressed in mature pollen grains. Expressed in roots, leaves, stems, flowers and siliques.

It localises to the cytoplasm. The protein resides in the cytoskeleton. Required for normal plant development. Required for pollen germination. Required for autophagic activity. Required to limit the pathogen-associated cell death response. May be involved in vacuolar protein sorting. Binds to microtubules. May facilitate efficient recruitment of other ATG proteins to assemble scaffolds for autophagosome biogenesis. The sequence is that of Beclin-1-like protein from Arabidopsis thaliana (Mouse-ear cress).